A 478-amino-acid polypeptide reads, in one-letter code: MELFLPSVLLILTVFCFYYLFKPKQTQNAPLPPGHVHWPLKIFETFDYMFKAKTNSIHKFIAERRNKYNTKLFKTSHIGQNMVFLCSPEGNKFLFANDYKLVRSWWPVTFLRVFENAEEEITPEQVIRARKQFLSFFNEPEALAKHVSITDEVVKDHVKLFWDGSDEVTVYPIARKLTFAISCRLLADIRDREILDELLPAMGDVVAAFFALPINLPGTKFNRAVKGSRKCRKIFVDIIKQRKIDLFEKGRKEANDVLSNILLENHRDGIEVNEVALAKNLVSLLSAAFDNPSVTIVSIMKNLAENPEIYARVRSEQLEIAKGRAPGENLAMEDLKKMKFSMNVLSESLRLEAPASGTFREALNDFTYEGYLIPKGWKVHWSTHATHRNPQYFKDPEKFDPARFERNDPIVPYSYVPFGGGHHICPGKDFAKLQILIFIHHVVKKFNWEKVNPDEQMIRVPNLKAAKGLPVRLYPYNK.

A helical membrane pass occupies residues 1–21; the sequence is MELFLPSVLLILTVFCFYYLF. Position 425 (Cys425) interacts with heme.

The protein belongs to the cytochrome P450 family. The cofactor is heme. In terms of tissue distribution, mainly expressed in petioles and, to a lower extent, in roots.

It localises to the membrane. It carries out the reaction (1S,3bR,4R,5aR,9aR,9bR,11aS)-1-[(4R)-5-[(2S)-3,3-dimethyloxiran-2-yl]-1,4-dihydroxybutan-2-yl]-3b,6,6,9a,11a-pentamethyl-7-oxo-1H,2H,3bH,4H,5H,5aH,6H,7H,9aH,9bH,10H,11H,11aH-cyclopenta[a]phenanthren-4-yl acetate + reduced [NADPH--hemoprotein reductase] + O2 = (1S,3bR,4R,5aR,9aR,9bR,11aS)-1-(1-hydroxy-4-oxobutan-2-yl)-3b,6,6,9a,11a-pentamethyl-7-oxo-1H,2H,3bH,4H,5H,5aH,6H,7H,9aH,9bH,10H,11H,11aH-cyclopenta[a]phenanthren-4-yl acetate + 2-methylpropanoate + oxidized [NADPH--hemoprotein reductase] + H2O + 2 H(+). The protein operates within secondary metabolite biosynthesis; terpenoid biosynthesis. In terms of biological role, monooxygenase involved in the biosynthesis of limonoids triterpene natural products such as azadirachtin, an antifeedant widely used as bioinsecticide, and possessing many medicinal applications including anti-tumoral, anti-malarial, anti-rheumatic, antibacterial, anti-inflammatory, anti-pyretic and diuretic effects. Catalyzes the formation of (1S,3bR,4R,5aR,9aR,9bR,11aS)-1-(1-hydroxy-4-oxobutan-2-yl)-3b,6,6,9a,11a-pentamethyl-7-oxo-1H,2H,3bH,4H,5H,5aH,6H,7H,9aH,9bH,10H,11H,11aH-cyclopenta[a]phenanthren-4-yl acetate. The chain is Cytochrome P450 family 716 subfamily AD polypeptide 4 from Melia azedarach (Chinaberry tree).